A 156-amino-acid chain; its full sequence is Small ribosomal subunit protein uS7 (156 aa).

This sequence belongs to the universal ribosomal protein uS7 family. In terms of assembly, part of the 30S ribosomal subunit. Contacts proteins S9 and S11.

Its function is as follows. One of the primary rRNA binding proteins, it binds directly to 16S rRNA where it nucleates assembly of the head domain of the 30S subunit. Is located at the subunit interface close to the decoding center, probably blocks exit of the E-site tRNA. In Thermoanaerobacter sp. (strain X514), this protein is Small ribosomal subunit protein uS7.